The chain runs to 391 residues: Aminoacetone oxidase (391 aa).

FAD is bound by residues A14, E33, I134, E362, N374, and I375.

The protein belongs to the BaiN/RdsA family. In terms of assembly, monomer. It depends on FAD as a cofactor.

In terms of biological role, flavoprotein that probably catalyzes the condensation of two molecules of aminoacetone to yield 3,6-dimethyl-2,5-dihydropyrazine, which is subsequently oxidized to 2,5-dimethylpyrazine. It could be involved in a microbial defense mechanism related to aminoacetone catabolism through a pathway yielding dimethylpyrazine derivatives instead of methylglyoxal. It has also low aminoacetone oxidase activity, and can produce hydrogen peroxide from aminoacetone. In addition, it shows very low L-amino acid oxidase activity, and can produce hydrogen peroxide from peptone and from seven amino acids, L-aspartate, L-tryptophan, L-lysine, L-isoleucine, L-arginine, L-asparagine and L-glutamine. It cannot use L-malate, oxaloacetate or alpha-aminobutyrate. Plays a role in antioxidant defense. The sequence is that of Aminoacetone oxidase from Streptococcus cristatus.